A 415-amino-acid polypeptide reads, in one-letter code: uncharacterized protein (415 aa).

Positions 66, 72, 75, and 149 each coordinate [4Fe-4S] cluster. Positions 249, 276, 296, and 344 each coordinate S-adenosyl-L-methionine. The Nucleophile role is filled by cysteine 370.

Belongs to the class I-like SAM-binding methyltransferase superfamily. RNA M5U methyltransferase family.

This is an uncharacterized protein from Brucella melitensis biotype 1 (strain ATCC 23456 / CCUG 17765 / NCTC 10094 / 16M).